Reading from the N-terminus, the 86-residue chain is Putative defensin-like protein 211 (86 aa).

The N-terminal stretch at methionine 1–serine 19 is a signal peptide. 3 disulfides stabilise this stretch: cysteine 55-cysteine 72, cysteine 58-cysteine 77, and cysteine 62-cysteine 79.

Belongs to the DEFL family.

It localises to the secreted. The sequence is that of Putative defensin-like protein 211 from Arabidopsis thaliana (Mouse-ear cress).